We begin with the raw amino-acid sequence, 88 residues long: Probable oxaloacetate decarboxylase gamma chain (88 aa).

A helical membrane pass occupies residues 13–35 (LMFSGMGFVIIFLLILIWAIGIV).

It belongs to the OadG family. Heterotrimer of an alpha, a beta and a gamma subunit. It depends on Na(+) as a cofactor.

It is found in the cell membrane. It catalyses the reaction oxaloacetate + 2 Na(+)(in) + H(+) = pyruvate + 2 Na(+)(out) + CO2. Functionally, catalyzes the decarboxylation of oxaloacetate coupled to Na(+) translocation. This is Probable oxaloacetate decarboxylase gamma chain from Mannheimia succiniciproducens (strain KCTC 0769BP / MBEL55E).